A 427-amino-acid chain; its full sequence is Enolase (427 aa).

Residue Q162 participates in (2R)-2-phosphoglycerate binding. The active-site Proton donor is E204. Mg(2+) is bound by residues D241, E282, and D309. The (2R)-2-phosphoglycerate site is built by K334, R363, S364, and K385. Catalysis depends on K334, which acts as the Proton acceptor.

This sequence belongs to the enolase family. Mg(2+) serves as cofactor.

Its subcellular location is the cytoplasm. The protein localises to the secreted. It is found in the cell surface. The enzyme catalyses (2R)-2-phosphoglycerate = phosphoenolpyruvate + H2O. The protein operates within carbohydrate degradation; glycolysis; pyruvate from D-glyceraldehyde 3-phosphate: step 4/5. Catalyzes the reversible conversion of 2-phosphoglycerate (2-PG) into phosphoenolpyruvate (PEP). It is essential for the degradation of carbohydrates via glycolysis. The polypeptide is Enolase (Frankia casuarinae (strain DSM 45818 / CECT 9043 / HFP020203 / CcI3)).